Reading from the N-terminus, the 652-residue chain is Aspartate--tRNA ligase, mitochondrial (652 aa).

The transit peptide at 1–46 (MYLGSWLNRLGRGLSRPIGKTKQPIWGSLSRSLTLSSQRVPEFSSF) directs the protein to the mitochondrion. Threonine 218 bears the Phosphothreonine mark. Serine 241 bears the Phosphoserine mark. The aspartate stretch occupies residues 243 to 246 (QQFK). Arginine 265 contacts L-aspartate. ATP-binding positions include 265-267 (RDE) and glutamate 534. Arginine 541 is a binding site for L-aspartate. 583–586 (GLDR) is an ATP binding site.

The protein belongs to the class-II aminoacyl-tRNA synthetase family. Type 1 subfamily. In terms of assembly, homodimer.

It is found in the mitochondrion matrix. The protein resides in the mitochondrion membrane. The catalysed reaction is tRNA(Asp) + L-aspartate + ATP = L-aspartyl-tRNA(Asp) + AMP + diphosphate. Catalyzes the attachment of aspartate to tRNA(Asp) in a two-step reaction: aspartate is first activated by ATP to form Asp-AMP and then transferred to the acceptor end of tRNA(Asp). The polypeptide is Aspartate--tRNA ligase, mitochondrial (Dars2) (Rattus norvegicus (Rat)).